We begin with the raw amino-acid sequence, 281 residues long: Microtubule-associated protein RP/EB family member 3 (281 aa).

One can recognise a Calponin-homology (CH) domain in the interval 14–116; the sequence is NLSRHDMLAW…FIQWFKKFFD (103 aa). Positions 157 to 181 are disordered; sequence VPQRTSPTGPKNMQTSGRLSNVAPP. The span at 158–175 shows a compositional bias: polar residues; it reads PQRTSPTGPKNMQTSGRL. 2 positions are modified to phosphoserine: serine 162 and serine 176. One can recognise an EB1 C-terminal domain in the interval 194–264; the sequence is GGHETDAQIL…LYATEEGFAP (71 aa). The tract at residues 217–260 is APC-binding; it reads DGLEKERDFYFSKLRDIELICQEHESENSPVISGIIGILYATEE. The DCTN1-binding stretch occupies residues 217–281; that stretch reads DGLEKERDFY…EHQQEDQDEY (65 aa). The segment at 261-281 is disordered; the sequence is GFAPPEDDEIEEHQQEDQDEY. Residues 272–281 show a composition bias toward basic and acidic residues; the sequence is EHQQEDQDEY.

It belongs to the MAPRE family. As to quaternary structure, homodimer. Heterodimer with MAPRE1. Binds monomeric and polymerized GTP-bound tubulin. Interacts with APC2. Interacts with DCTN1 and SRCIN1. Binds to the C-terminal domain of APC. Interacts (via C-terminus) with CLIP1. Interacts with SLAIN2 and SLAIN1. Interacts with AKAP9. Interacts with PDE4DIP. Interacts with PDE4DIP isoform 13/MMG8/SMYLE; this interaction is required for its recruitment to the Golgi apparatus. In terms of tissue distribution, predominantly expressed in brain and muscle.

It localises to the cytoplasm. The protein resides in the cytoskeleton. Plus-end tracking protein (+TIP) that binds to the plus-end of microtubules and regulates the dynamics of the microtubule cytoskeleton. Promotes microtubule growth. May be involved in spindle function by stabilizing microtubules and anchoring them at centrosomes. Also acts as a regulator of minus-end microtubule organization: interacts with the complex formed by AKAP9 and PDE4DIP, leading to recruit CAMSAP2 to the Golgi apparatus, thereby tethering non-centrosomal minus-end microtubules to the Golgi, an important step for polarized cell movement. Promotes elongation of CAMSAP2-decorated microtubule stretches on the minus-end of microtubules. In Homo sapiens (Human), this protein is Microtubule-associated protein RP/EB family member 3 (MAPRE3).